A 285-amino-acid chain; its full sequence is Undecaprenyl-diphosphatase (285 aa).

Transmembrane regions (helical) follow at residues D40–F60, L92–I112, S122–A142, F159–I179, F197–L217, L233–L253, and F259–I279.

The protein belongs to the UppP family.

It is found in the cell inner membrane. The enzyme catalyses di-trans,octa-cis-undecaprenyl diphosphate + H2O = di-trans,octa-cis-undecaprenyl phosphate + phosphate + H(+). Its function is as follows. Catalyzes the dephosphorylation of undecaprenyl diphosphate (UPP). Confers resistance to bacitracin. In Hyphomonas neptunium (strain ATCC 15444), this protein is Undecaprenyl-diphosphatase.